Reading from the N-terminus, the 179-residue chain is Large ribosomal subunit protein bL9 (179 aa).

Positions 155–179 (KPEEAPVPVAEEPTAETEQAEVAAE) are disordered. Residues 167–179 (PTAETEQAEVAAE) are compositionally biased toward acidic residues.

It belongs to the bacterial ribosomal protein bL9 family.

Functionally, binds to the 23S rRNA. This chain is Large ribosomal subunit protein bL9, found in Porphyromonas gingivalis (strain ATCC BAA-308 / W83).